A 74-amino-acid chain; its full sequence is uncharacterized protein (74 aa).

This is an uncharacterized protein from Enterobacteria phage T4 (Bacteriophage T4).